The primary structure comprises 25 residues: Dermaseptin-5.1TR (25 aa).

Residue V25 is modified to Valine amide.

Expressed by the skin glands.

The protein localises to the secreted. Has antimicrobial activity. The chain is Dermaseptin-5.1TR from Phyllomedusa trinitatis (Trinidad leaf frog).